Reading from the N-terminus, the 146-residue chain is Large ribosomal subunit protein uL11 (146 aa).

It belongs to the universal ribosomal protein uL11 family. As to quaternary structure, part of the ribosomal stalk of the 50S ribosomal subunit. Interacts with L10 and the large rRNA to form the base of the stalk. L10 forms an elongated spine to which L12 dimers bind in a sequential fashion forming a multimeric L10(L12)X complex. In terms of processing, one or more lysine residues are methylated.

Forms part of the ribosomal stalk which helps the ribosome interact with GTP-bound translation factors. The chain is Large ribosomal subunit protein uL11 from Corynebacterium kroppenstedtii (strain DSM 44385 / JCM 11950 / CIP 105744 / CCUG 35717).